The sequence spans 37 residues: Cytochrome b6-f complex subunit 7 (37 aa).

Residues 5 to 25 (IFGTAFLFIVLVPVGLALGAF) traverse the membrane as a helical segment.

It belongs to the PetM family. In terms of assembly, the 4 large subunits of the cytochrome b6-f complex are cytochrome b6, subunit IV (17 kDa polypeptide, PetD), cytochrome f and the Rieske protein, while the 4 small subunits are PetG, PetL, PetM and PetN. The complex functions as a dimer.

The protein resides in the cellular thylakoid membrane. Functionally, component of the cytochrome b6-f complex, which mediates electron transfer between photosystem II (PSII) and photosystem I (PSI), cyclic electron flow around PSI, and state transitions. In Synechococcus elongatus (strain ATCC 33912 / PCC 7942 / FACHB-805) (Anacystis nidulans R2), this protein is Cytochrome b6-f complex subunit 7.